Here is a 56-residue protein sequence, read N- to C-terminus: Sec-independent protein translocase protein TatA (56 aa).

Residues 1 to 21 traverse the membrane as a helical segment; the sequence is MALGPWQIFLILVIILVLFGA.

Belongs to the TatA/E family. The Tat system comprises two distinct complexes: a TatABC complex, containing multiple copies of TatA, TatB and TatC subunits, and a separate TatA complex, containing only TatA subunits. Substrates initially bind to the TatABC complex, which probably triggers association of the separate TatA complex to form the active translocon.

It is found in the cell inner membrane. In terms of biological role, part of the twin-arginine translocation (Tat) system that transports large folded proteins containing a characteristic twin-arginine motif in their signal peptide across membranes. TatA could form the protein-conducting channel of the Tat system. This chain is Sec-independent protein translocase protein TatA, found in Ehrlichia ruminantium (strain Welgevonden).